A 698-amino-acid polypeptide reads, in one-letter code: Polyribonucleotide nucleotidyltransferase (698 aa).

Mg(2+) contacts are provided by Asp-487 and Asp-493. Residues 555–614 (PKIIQIQIDPQKIGDVVGQRGKTINAIIEQTGVKIDINDEGAVSVCGTDKDMMDKAINMI) enclose the KH domain. The region spanning 624–692 (GQVFEGKVIS…KMGRISFSIK (69 aa)) is the S1 motif domain.

Belongs to the polyribonucleotide nucleotidyltransferase family. Requires Mg(2+) as cofactor.

The protein localises to the cytoplasm. It carries out the reaction RNA(n+1) + phosphate = RNA(n) + a ribonucleoside 5'-diphosphate. Involved in mRNA degradation. Catalyzes the phosphorolysis of single-stranded polyribonucleotides processively in the 3'- to 5'-direction. This Lachnoclostridium phytofermentans (strain ATCC 700394 / DSM 18823 / ISDg) (Clostridium phytofermentans) protein is Polyribonucleotide nucleotidyltransferase.